Here is a 121-residue protein sequence, read N- to C-terminus: MSNDDIVSRIASMTALELSDLVGLLEQRFNISRIAPAPCQPGSNAVEAEQDRRDRKVFLTHSGSNKIAVIRAVRDVTKLGLKESKGLVDSAPSLVAEGLSADEAEDIRAKVEAAGAKAEVR.

The protein belongs to the bacterial ribosomal protein bL12 family. As to quaternary structure, homodimer. Part of the ribosomal stalk of the 50S ribosomal subunit. Forms a multimeric L10(L12)X complex, where L10 forms an elongated spine to which 2 to 4 L12 dimers bind in a sequential fashion. Binds GTP-bound translation factors.

Forms part of the ribosomal stalk which helps the ribosome interact with GTP-bound translation factors. Is thus essential for accurate translation. In Tremblaya princeps, this protein is Large ribosomal subunit protein bL12.